We begin with the raw amino-acid sequence, 471 residues long: Variant surface glycoprotein ILTAT 1.1BC (471 aa).

The N-terminal stretch at 1 to 21 (MVKAIASLMLLHIWAIEEIKA) is a signal peptide. An N-linked (GlcNAc...) asparagine glycan is attached at asparagine 130. Over residues 158 to 168 (TVSKTTECNTE) the composition is skewed to polar residues. Disordered regions lie at residues 158–183 (TVSK…TLSK) and 204–232 (GGAC…TTAS). Over residues 214–226 (DKIHITNETDSKN) the composition is skewed to basic and acidic residues. N-linked (GlcNAc...) asparagine glycosylation is found at asparagine 220 and asparagine 260. Cystine bridges form between cysteine 397-cysteine 410 and cysteine 406-cysteine 421. Residues 432 to 454 (AEQAATNQETEGKDGKTTNTTGS) form a disordered region. The N-linked (GlcNAc...) asparagine glycan is linked to asparagine 450. Serine 454 carries GPI-anchor amidated serine lipidation. The propeptide at 455–471 (NSFLINKAPVLLAFLLL) is removed in mature form.

The protein localises to the cell membrane. VSG forms a coat on the surface of the parasite. The trypanosome evades the immune response of the host by expressing a series of antigenically distinct VSGs from an estimated 1000 VSG genes. This chain is Variant surface glycoprotein ILTAT 1.1BC, found in Trypanosoma brucei brucei.